A 677-amino-acid polypeptide reads, in one-letter code: Methionine--tRNA ligase (677 aa).

The 'HIGH' region motif lies at 15–25 (PYANGSIHLGH). Zn(2+) is bound by residues cysteine 146, cysteine 149, cysteine 159, and cysteine 162. Residues 333–337 (KMSKS) carry the 'KMSKS' region motif. Residue lysine 336 participates in ATP binding. The region spanning 575–677 (DFAKVDLRVA…AGAKPGHQVK (103 aa)) is the tRNA-binding domain.

The protein belongs to the class-I aminoacyl-tRNA synthetase family. MetG type 1 subfamily. In terms of assembly, homodimer. Requires Zn(2+) as cofactor.

The protein localises to the cytoplasm. The enzyme catalyses tRNA(Met) + L-methionine + ATP = L-methionyl-tRNA(Met) + AMP + diphosphate. Is required not only for elongation of protein synthesis but also for the initiation of all mRNA translation through initiator tRNA(fMet) aminoacylation. The protein is Methionine--tRNA ligase of Escherichia coli O157:H7.